A 652-amino-acid polypeptide reads, in one-letter code: Acetyl-coenzyme A synthetase (652 aa).

Residues 191–194 and Thr311 each bind CoA; that span reads RAGN. Residues 387-389, 411-416, Asp503, and Arg518 each bind ATP; these read GEP and DTWWQT. Ser526 contributes to the CoA binding site. ATP is bound at residue Arg529. Mg(2+)-binding residues include Val540, His542, and Val545. Arg587 is a CoA binding site. Lys613 bears the N6-acetyllysine mark.

The protein belongs to the ATP-dependent AMP-binding enzyme family. It depends on Mg(2+) as a cofactor. Acetylated. Deacetylation by the SIR2-homolog deacetylase activates the enzyme.

The catalysed reaction is acetate + ATP + CoA = acetyl-CoA + AMP + diphosphate. Its function is as follows. Catalyzes the conversion of acetate into acetyl-CoA (AcCoA), an essential intermediate at the junction of anabolic and catabolic pathways. AcsA undergoes a two-step reaction. In the first half reaction, AcsA combines acetate with ATP to form acetyl-adenylate (AcAMP) intermediate. In the second half reaction, it can then transfer the acetyl group from AcAMP to the sulfhydryl group of CoA, forming the product AcCoA. This chain is Acetyl-coenzyme A synthetase, found in Marinomonas sp. (strain MWYL1).